Here is a 442-residue protein sequence, read N- to C-terminus: 6-phospho-alpha-glucosidase 1 (442 aa).

F6 to D72 is an NAD(+) binding site. Substrate-binding residues include R95 and N149. Residue C171 participates in Mn(2+) binding. Residue D172 is the Proton donor of the active site. A Mn(2+)-binding site is contributed by H202. The active-site Proton acceptor is Y265. R285 is a binding site for substrate.

This sequence belongs to the glycosyl hydrolase 4 family. In terms of assembly, homodimer. May also form homotetramer. Mn(2+) serves as cofactor. Requires Co(2+) as cofactor. Ni(2+) is required as a cofactor. The cofactor is Fe(2+). It depends on Mg(2+) as a cofactor. NAD(+) serves as cofactor.

The enzyme catalyses alpha-maltose 6'-phosphate + H2O = D-glucose 6-phosphate + D-glucose. Is inhibited by EDTA in vitro. Functionally, is probably involved in the catabolism of alpha-glycosides accumulated via a phosphoenolpyruvate-dependent phosphotransferase system (PEP-PTS). Hydrolyzes a wide variety of 6-phospho-alpha-D-glucosides including the five isomeric derivatives of sucrose, i.e. trehalulose-6'-phosphate, turanose-6'-phosphate, maltulose-6'-phosphate, leucrose-6'-phosphate, and palatinose-6'-phosphate, but is not active on sucrose-6-phosphate. Can also hydrolyze maltose-6'-phosphate and methyl-alpha-glucose-6-phosphate, and poorly, trehalose-6-phosphate. Fails to hydrolyze beta-O-linked phosphorylated disaccharides such as cellobiose-6'-phosphate and gentiobiose-6'-phosphate. Does not seem to be involved in maltose catabolism. The chain is 6-phospho-alpha-glucosidase 1 (simA) from Lacticaseibacillus paracasei (strain ATCC 334 / BCRC 17002 / CCUG 31169 / CIP 107868 / KCTC 3260 / NRRL B-441) (Lactobacillus paracasei).